The sequence spans 161 residues: ATP synthase subunit b 1 (161 aa).

The helical transmembrane segment at 1–21 (MFATAEFWILACLVAFFAILG) threads the bilayer.

This sequence belongs to the ATPase B chain family. As to quaternary structure, F-type ATPases have 2 components, F(1) - the catalytic core - and F(0) - the membrane proton channel. F(1) has five subunits: alpha(3), beta(3), gamma(1), delta(1), epsilon(1). F(0) has three main subunits: a(1), b(2) and c(10-14). The alpha and beta chains form an alternating ring which encloses part of the gamma chain. F(1) is attached to F(0) by a central stalk formed by the gamma and epsilon chains, while a peripheral stalk is formed by the delta and b chains.

It localises to the cell inner membrane. F(1)F(0) ATP synthase produces ATP from ADP in the presence of a proton or sodium gradient. F-type ATPases consist of two structural domains, F(1) containing the extramembraneous catalytic core and F(0) containing the membrane proton channel, linked together by a central stalk and a peripheral stalk. During catalysis, ATP synthesis in the catalytic domain of F(1) is coupled via a rotary mechanism of the central stalk subunits to proton translocation. In terms of biological role, component of the F(0) channel, it forms part of the peripheral stalk, linking F(1) to F(0). This chain is ATP synthase subunit b 1, found in Parvibaculum lavamentivorans (strain DS-1 / DSM 13023 / NCIMB 13966).